Reading from the N-terminus, the 313-residue chain is Ribonuclease Z (313 aa).

The Zn(2+) site is built by His62, His64, Asp66, His67, His142, Asp212, and His270. The active-site Proton acceptor is Asp66.

Belongs to the RNase Z family. Homodimer. Requires Zn(2+) as cofactor.

It catalyses the reaction Endonucleolytic cleavage of RNA, removing extra 3' nucleotides from tRNA precursor, generating 3' termini of tRNAs. A 3'-hydroxy group is left at the tRNA terminus and a 5'-phosphoryl group is left at the trailer molecule.. Functionally, zinc phosphodiesterase, which displays some tRNA 3'-processing endonuclease activity. Probably involved in tRNA maturation, by removing a 3'-trailer from precursor tRNA. This chain is Ribonuclease Z, found in Cytophaga hutchinsonii (strain ATCC 33406 / DSM 1761 / CIP 103989 / NBRC 15051 / NCIMB 9469 / D465).